Consider the following 104-residue polypeptide: L-rhamnose mutarotase (104 aa).

Substrate is bound at residue tyrosine 18. Histidine 22 serves as the catalytic Proton donor. Substrate-binding positions include tyrosine 41 and 76–77; that span reads WW.

Belongs to the rhamnose mutarotase family. In terms of assembly, homodimer.

The protein localises to the cytoplasm. It catalyses the reaction alpha-L-rhamnose = beta-L-rhamnose. It functions in the pathway carbohydrate metabolism; L-rhamnose metabolism. Functionally, involved in the anomeric conversion of L-rhamnose. The protein is L-rhamnose mutarotase of Shigella sonnei (strain Ss046).